We begin with the raw amino-acid sequence, 99 residues long: uncharacterized protein (99 aa).

The protein resides in the mitochondrion. This is an uncharacterized protein from Marchantia polymorpha (Common liverwort).